Consider the following 635-residue polypeptide: Probable clathrin assembly protein At4g32285 (635 aa).

The region spanning 23–159 is the ENTH domain; sequence VASNMAPDLE…ELALFERRGR (137 aa). The tract at residues 157–208 is disordered; that stretch reads RGRNGGGSSSSHQSNGDDGYNRSRDDFRSPPPRTYDYETGNGFGMPKRSRSF. Low complexity predominate over residues 165–174; it reads SSSHQSNGDD. Residues 175–184 are compositionally biased toward basic and acidic residues; sequence GYNRSRDDFR. Serine 207 bears the Phosphoserine mark. Residue threonine 224 is modified to Phosphothreonine. Positions 357-369 are enriched in basic and acidic residues; the sequence is AKRAKSPERKEIE. Residues 357-412 are disordered; the sequence is AKRAKSPERKEIEAPPAPAPPVEEPVDMNEIKALPPPENHTPPPPPAPEPKPQQPQ. The span at 390-409 shows a compositional bias: pro residues; sequence LPPPENHTPPPPPAPEPKPQ.

The protein resides in the membrane. Its subcellular location is the clathrin-coated pit. It localises to the golgi apparatus. The protein localises to the cytoplasmic vesicle. It is found in the clathrin-coated vesicle. The chain is Probable clathrin assembly protein At4g32285 from Arabidopsis thaliana (Mouse-ear cress).